The following is a 101-amino-acid chain: Unclassified hydrophobin dewD (101 aa).

An N-terminal signal peptide occupies residues 1 to 21; sequence MHLSTSAAAILALSLAGPTMA. 4 disulfides stabilise this stretch: Cys27-Cys81, Cys41-Cys73, Cys42-Cys60, and Cys82-Cys91.

Self-assembles to form functional amyloid fibrils called rodlets. Self-assembly into fibrillar rodlets occurs spontaneously at hydrophobic:hydrophilic interfaces and the rodlets further associate laterally to form amphipathic monolayers.

It is found in the secreted. The protein localises to the spore wall. Functionally, aerial growth, conidiation, and dispersal of filamentous fungi in the environment rely upon a capability of their secreting small amphipathic proteins called hydrophobins (HPBs) with low sequence identity. Class I can self-assemble into an outermost layer of rodlet bundles on aerial cell surfaces, conferring cellular hydrophobicity that supports fungal growth, development and dispersal; whereas Class II form highly ordered films at water-air interfaces through intermolecular interactions but contribute nothing to the rodlet structure. DewD is an unclassified hydrophobin that contributes to the hydrophobicity of the spore surface. The sequence is that of Unclassified hydrophobin dewD from Emericella nidulans (strain FGSC A4 / ATCC 38163 / CBS 112.46 / NRRL 194 / M139) (Aspergillus nidulans).